A 288-amino-acid chain; its full sequence is MAQHPLVQRLLDVKFDTKRFVAIATHGPKNFPDAEGRKFFADHFDVTIQASILYMVVVFGTKWFMRNRQPFQLTIPLNIWNFILAAFSIAGAVKMTPEFFGTIANKGIVASYCKVFDFTKGENGYWVWLFMASKLFELVDTIFLVLRKRPLMFLHWYHHILTMIYAWYSHPLTPGFNRYGIYLNFVVHAFMYSYYFLRSMKIRVPGFIAQAITSLQIVQFIISCAVLAHLGYLMHFTNANCDFEPSVFKLAVFMDTTYLALFVNFFLQSYVLRGGKDKYKAVPKKKNN.

The next 7 helical transmembrane spans lie at 39-59 (FFAD…VVVF), 73-93 (LTIP…AGAV), 126-146 (WVWL…FLVL), 150-170 (PLMF…WYSH), 180-197 (GIYL…YYFL), 217-237 (IVQF…MHFT), and 247-267 (VFKL…NFFL).

Belongs to the ELO family.

The protein localises to the membrane. It carries out the reaction (6Z,9Z,12Z)-octadecatrienoyl-CoA + malonyl-CoA + H(+) = (8Z,11Z,14Z)-3-oxoeicosatrienoyl-CoA + CO2 + CoA. The enzyme catalyses (6Z,9Z,12Z,15Z)-octadecatetraenoyl-CoA + malonyl-CoA + H(+) = (8Z,11Z,14Z,17Z)-3-oxoicosatetraenoyl-CoA + CO2 + CoA. The catalysed reaction is (9Z)-hexadecenoyl-CoA + malonyl-CoA + H(+) = 3-oxo-(11Z)-octadecenoyl-CoA + CO2 + CoA. The protein operates within lipid metabolism; fatty acid biosynthesis. Functionally, catalyzes the first and rate-limiting reaction of the four reactions that constitute the long-chain fatty acids elongation cycle. Uses malonyl-CoA to add 2 carbons per cycle to the chain of long-chain fatty acids. Condensing enzyme that catalyzes the elongation of monounsaturated (MUFA) and polyunsaturated (PUFA) fatty acids that are involved in multiple biological processes as precursors of membrane lipids and lipid mediators. The chain is Long chain fatty acid elongase 1 from Caenorhabditis elegans.